The chain runs to 301 residues: Quinolinate synthase (301 aa).

Positions 21 and 38 each coordinate iminosuccinate. Cys83 lines the [4Fe-4S] cluster pocket. Iminosuccinate contacts are provided by residues 109–111 (YIN) and Ser126. Cys169 is a binding site for [4Fe-4S] cluster. Iminosuccinate is bound by residues 195–197 (HPE) and Thr212. Cys257 contributes to the [4Fe-4S] cluster binding site.

Belongs to the quinolinate synthase family. Type 2 subfamily. [4Fe-4S] cluster is required as a cofactor.

The protein localises to the cytoplasm. The enzyme catalyses iminosuccinate + dihydroxyacetone phosphate = quinolinate + phosphate + 2 H2O + H(+). It participates in cofactor biosynthesis; NAD(+) biosynthesis; quinolinate from iminoaspartate: step 1/1. Functionally, catalyzes the condensation of iminoaspartate with dihydroxyacetone phosphate to form quinolinate. The chain is Quinolinate synthase from Clostridium perfringens (strain ATCC 13124 / DSM 756 / JCM 1290 / NCIMB 6125 / NCTC 8237 / Type A).